The following is a 470-amino-acid chain: Cupincin (470 aa).

The signal sequence occupies residues 1-34 (MAKKKTSSSMARSQLAALLISLCFLSLASNAVGW). The span at 36–52 (RRGEREEEDERRRHGGE) shows a compositional bias: basic and acidic residues. Disordered stretches follow at residues 36–57 (RRGE…GRPY) and 240–261 (KSCS…PSSL). 2 Cupin type-1 domains span residues 57–215 (YHFG…EELE) and 259–445 (SSLT…AREA). N-linked (GlcNAc...) asparagine glycosylation is present at asparagine 297. Residues 330–368 (PHVSGGGSSERREREREHGRRREEEQGEEEHGERGEKAR) are disordered. Positions 338 to 367 (SERREREREHGRRREEEQGEEEHGERGEKA) are enriched in basic and acidic residues. Residues histidine 347, glutamate 352, and histidine 360 each coordinate Zn(2+).

Belongs to the 7S seed storage protein family. In terms of assembly, homotrimer. Zn(2+) is required as a cofactor.

It is found in the secreted. Seed storage protein. Globulin-like protein that acts as a zinc metalloprotease. Cleaves specifically between Leu-15 and Tyr-16 of insulin B chain, and Gln-1 and Leu-2 of neurotensin (NT) peptide in vitro. May play a role as an initiating endopeptidase in germinating seeds. The sequence is that of Cupincin from Oryza sativa subsp. indica (Rice).